The primary structure comprises 417 residues: Phosphoglycerate kinase (417 aa).

Residues valine 23, aspartate 24, phenylalanine 25, asparagine 26, glutamine 39, arginine 40, serine 63, histidine 64, glycine 66, arginine 67, leucine 122, arginine 123, histidine 170, and arginine 171 each coordinate (2R)-3-phosphoglycerate. An ADP-binding site is contributed by glycine 214. Glycine 214 contacts CDP. AMP contacts are provided by alanine 215 and lysine 216. Alanine 215 serves as a coordination point for ATP. Alanine 215 lines the Mg(2+) pocket. CDP is bound at residue aspartate 219. Aspartate 219 contributes to the Mg(2+) binding site. Position 220 (lysine 220) interacts with AMP. Residue lysine 220 participates in ATP binding. Glycine 238 serves as a coordination point for ADP. Glycine 238 serves as a coordination point for CDP. Positions 239 and 313 each coordinate AMP. ATP is bound by residues alanine 239 and glycine 313. 2 residues coordinate CDP: glycine 338 and phenylalanine 343. ADP is bound at residue phenylalanine 343. An AMP-binding site is contributed by glutamate 344. ATP is bound by residues glutamate 344, aspartate 375, and threonine 376. Residue aspartate 375 participates in Mg(2+) binding.

Belongs to the phosphoglycerate kinase family. As to quaternary structure, monomer. It depends on Mg(2+) as a cofactor.

The protein resides in the cytoplasm. Its subcellular location is the mitochondrion. The catalysed reaction is (2R)-3-phosphoglycerate + ATP = (2R)-3-phospho-glyceroyl phosphate + ADP. Its pathway is carbohydrate degradation; glycolysis; pyruvate from D-glyceraldehyde 3-phosphate: step 2/5. In terms of biological role, catalyzes one of the two ATP producing reactions in the glycolytic pathway via the reversible conversion of 1,3-diphosphoglycerate to 3-phosphoglycerate. Both L- and D- forms of purine and pyrimidine nucleotides can be used as substrates, but the activity is much lower on pyrimidines. Negatively regulates the biosynthesis of acetyl-CoA from pyruvate in the mitochondrion. This chain is Phosphoglycerate kinase (pgkA), found in Aspergillus oryzae (strain ATCC 42149 / RIB 40) (Yellow koji mold).